The chain runs to 94 residues: Co-chaperonin GroES (94 aa).

Belongs to the GroES chaperonin family. Heptamer of 7 subunits arranged in a ring. Interacts with the chaperonin GroEL.

It localises to the cytoplasm. Functionally, together with the chaperonin GroEL, plays an essential role in assisting protein folding. The GroEL-GroES system forms a nano-cage that allows encapsulation of the non-native substrate proteins and provides a physical environment optimized to promote and accelerate protein folding. GroES binds to the apical surface of the GroEL ring, thereby capping the opening of the GroEL channel. This is Co-chaperonin GroES from Ehrlichia chaffeensis.